A 519-amino-acid polypeptide reads, in one-letter code: Chloroethene reductive dehalogenase (519 aa).

Positions 1 to 43 (MSKFHKTISRRDFMKGLGLAGAGIGAVAASAPVFHDIDELVSS) form a signal peptide, tat-type signal. 4Fe-4S ferredoxin-type domains follow at residues 388-420 (PTPP…QEDE) and 435-465 (LGYR…LENA). 8 residues coordinate [4Fe-4S] cluster: cysteine 400, cysteine 403, cysteine 406, cysteine 410, cysteine 444, cysteine 448, cysteine 451, and cysteine 455.

This sequence belongs to the PceA family. Requires [4Fe-4S] cluster as cofactor. Corrinoid is required as a cofactor. In terms of processing, predicted to be exported by the Tat system. The position of the signal peptide cleavage has been experimentally proven.

The protein localises to the cell membrane. It carries out the reaction chloroethene + AH2 = ethene + chloride + A + H(+). The catalysed reaction is (Z)-1,2-dichloroethene + AH2 = chloroethene + chloride + A + H(+). It catalyses the reaction 1,1-dichloroethene + AH2 = chloroethene + chloride + A + H(+). In terms of biological role, catalyzes the reductive dechlorination of chloroethene (or vinyl chloride, VC) to ethene. Can also reduce all dichloroethene (DCE) isomers, but not tetrachloroethene (PCE) or trichloroethene (TCE), at high rates. Reduced methyl viologen can act as the artificial electron donor. The sequence is that of Chloroethene reductive dehalogenase from Dehalococcoides mccartyi (strain VS).